A 391-amino-acid polypeptide reads, in one-letter code: Ferrochelatase (391 aa).

Residues His196 and Glu281 each contribute to the Fe cation site.

Belongs to the ferrochelatase family.

The protein resides in the cytoplasm. The enzyme catalyses heme b + 2 H(+) = protoporphyrin IX + Fe(2+). The protein operates within porphyrin-containing compound metabolism; protoheme biosynthesis; protoheme from protoporphyrin-IX: step 1/1. In terms of biological role, catalyzes the ferrous insertion into protoporphyrin IX. The sequence is that of Ferrochelatase from Prochlorococcus marinus (strain MIT 9312).